The primary structure comprises 262 residues: Phosphonates import ATP-binding protein PhnC (262 aa).

The region spanning 5 to 253 (IRVEKLAKTF…RFDHLYRSIN (249 aa)) is the ABC transporter domain. 37–44 (GPSGSGKS) contributes to the ATP binding site.

The protein belongs to the ABC transporter superfamily. Phosphonates importer (TC 3.A.1.9.1) family. In terms of assembly, the complex is composed of two ATP-binding proteins (PhnC), two transmembrane proteins (PhnE) and a solute-binding protein (PhnD).

The protein localises to the cell inner membrane. It catalyses the reaction phosphonate(out) + ATP + H2O = phosphonate(in) + ADP + phosphate + H(+). Its function is as follows. Part of the ABC transporter complex PhnCDE involved in phosphonates import. Responsible for energy coupling to the transport system. This chain is Phosphonates import ATP-binding protein PhnC, found in Escherichia coli (strain UTI89 / UPEC).